A 235-amino-acid polypeptide reads, in one-letter code: Aspartate/glutamate leucyltransferase (235 aa).

The protein belongs to the R-transferase family. Bpt subfamily.

It is found in the cytoplasm. It carries out the reaction N-terminal L-glutamyl-[protein] + L-leucyl-tRNA(Leu) = N-terminal L-leucyl-L-glutamyl-[protein] + tRNA(Leu) + H(+). It catalyses the reaction N-terminal L-aspartyl-[protein] + L-leucyl-tRNA(Leu) = N-terminal L-leucyl-L-aspartyl-[protein] + tRNA(Leu) + H(+). In terms of biological role, functions in the N-end rule pathway of protein degradation where it conjugates Leu from its aminoacyl-tRNA to the N-termini of proteins containing an N-terminal aspartate or glutamate. The sequence is that of Aspartate/glutamate leucyltransferase from Pseudomonas fluorescens (strain Pf0-1).